Reading from the N-terminus, the 528-residue chain is MDSSSSSSSSSPSSSYGVARVSHISNPCIFGEVGSSSSSTYRDKKWKLMKWVSKLFKSGSNGGGSGAHTNHHPPQFQEDENMVFPLPPSSLDDRSRGARDKEELDRSISLSLADNTKRPHGYGWSMDNNRDFPRPFHGGLNPSSFIPPYEPSYQYRRRQRICGGCNSDIGSGNYLGCMGTFFHPECFRCHSCGYAITEHEFSLSGTKPYHKLCFKELTHPKCEVCHHFIPTNDAGLIEYRCHPFWNQKYCPSHEYDKTARCCSCERLESWDVRYYTLEDGRSLCLECMETAITDTGECQPLYHAIRDYYEGMYMKLDQQIPMLLVQREALNDAIVGEKNGYHHMPETRGLCLSEEQTVTSVLRRPRLGAHRLVGMRTQPQRLTRKCEVTAILVLYGLPRLLTGAILAHELMHGWLRLNGFRNLNPEVEEGICQVLSYMWLESEVLSDPSTRNLPSTSSVATSSSSSFSNKKGGKSNVEKKLGEFFKHQIAHDASPAYGGGFRAANAAACKYGLRRTLDHIRLTGTFPL.

The tract at residues 60-108 is disordered; sequence SNGGGSGAHTNHHPPQFQEDENMVFPLPPSSLDDRSRGARDKEELDRSI. Positions 91–106 are enriched in basic and acidic residues; sequence LDDRSRGARDKEELDR. The region spanning 99–118 is the UIM 1 domain; it reads RDKEELDRSISLSLADNTKR. The UIM 2; degenerate domain occupies 127-148; that stretch reads DNNRDFPRPFHGGLNPSSFIPP. In terms of domain architecture, LIM zinc-binding spans 160–220; the sequence is RICGGCNSDI…KLCFKELTHP (61 aa). Residues 447 to 474 are disordered; sequence DPSTRNLPSTSSVATSSSSSFSNKKGGK. The segment covering 455-470 has biased composition (low complexity); it reads STSSVATSSSSSFSNK.

In terms of assembly, interacts with ubiquitin, TCP14 and TCP15. In terms of processing, polyubiquitinated by DA2. Expressed in the vasculature of leaves, inflorescence stems, flowers, hypocotyls, and primary and lateral roots. In roots, expressed in phloem companion cells.

Its function is as follows. Acts redundantly with DA1 and DAR1 to regulate endoreduplication during leaf development. Together with DA1 and DAR1, modulates the protein stability of the transcription factors TCP14 and TCP15, which repress endoreduplication by directly regulating the expression of cell-cycle genes. Involved in root phloem development. Is an essential component of early phloem development, long-distance delivery of phloem content, and proper maintenance of root system architecture. Involved in the control of root meristem size. Functions genetically downstream of cytokinin and IAA3 to maintain normal auxin distribution by influencing polar auxin transport. Acts through the PLETHORA pathway, upstream of PLT1 and PLT2 to influence root stem cell niche activity and thus control root meristem size. In Arabidopsis thaliana (Mouse-ear cress), this protein is Protein DA1-related 2.